Here is a 700-residue protein sequence, read N- to C-terminus: MGVRGLHGFVASSCPHVCTVVNFKELAERHRSQHPGGTPTIVVDAMCCLRYWYTPESWVCGGQWREYYSSLREFVRTFTAVGIKLIFFFDGMVEQSKRDEWVKRRLKNNREIAKIFHYIKSRREQPGRNMFFIPSGLAIFTRFALKALGQETLCSLQEADYEVASYGFQNNCLGILGEDTDYLIYDTCPYFSISELSLDSLDTVMLCREKLCQSLGLHLADLPLLACLLGNDVIPEGMFESFRYKCLTSYASVRESCDRKGNVILAVAEHISKVLRLHQGEKKLEEMLPLGPNKALFYKGVASYLLPGQKSPWFIQKPEDVVTLDKQVLSMSSDPESKQEFPVCMDSESKQKLPVGTDPEFNLEAPMCTNTEVKQEDPVNVGPEAKHQVTVVLDPEILKVARAQHVQAESYLVYSVMSSGEVECSNSLEDATDQALPSQAFVYRPVRQRVYSLLLGGGGGGSSTGPAVKEWFVYSGNPLRQPDLVRPLQMNIPGGTPSLRQLWLSQEPGIQAQRLDTLLACFDLSSSREELQAVERPFQALCCLLVYLFVQVDTLCLEDLHAFIAQALCLQGKPTMELADLQLDHIDPRAVQLATLLVRGLTTLVLVNGACGSPWEMADFMPWHLFDGKLFHQKYLQSEKGYTAEVLVEQNRSHVTRFHTLKSVVCKACGKESRPIVSRRHWRPHHAGSRQYEPDQWRRY.

The protein belongs to the constitutive coactivator of PPAR-gamma family. As to quaternary structure, interacts with ESR1 and RXRA. Interacts with PPARG; in a ligand-independent manner.

It is found in the nucleus. Its function is as follows. Functions as a transactivator of PPARG and ESR1. Functions in adipogenesis through PPARG activation. The protein is Constitutive coactivator of peroxisome proliferator-activated receptor gamma (FAM120B) of Bos taurus (Bovine).